Here is a 369-residue protein sequence, read N- to C-terminus: S-adenosyl-L-methionine-dependent uroporphyrinogen III methyltransferase, chloroplastic (369 aa).

A chloroplast-targeting transit peptide spans 1–28; it reads MALVQRIPISSSSIRNWQQARTNLTPIC. Residues Pro124, 200–202, 230–231, Met284, and Thr341 each bind S-adenosyl-L-homocysteine; these read GGD and TA.

It belongs to the precorrin methyltransferase family. Mostly expressed in leaves, and, to a lower extent, in stems, flowers and siliques.

It is found in the plastid. The protein resides in the chloroplast. The catalysed reaction is uroporphyrinogen III + 2 S-adenosyl-L-methionine = precorrin-2 + 2 S-adenosyl-L-homocysteine + H(+). It participates in porphyrin-containing compound metabolism; siroheme biosynthesis; precorrin-2 from uroporphyrinogen III: step 1/1. Essential protein required for siroheme biosynthesis. Catalyzes the two successive C-2 and C-7 methylation reactions involved in the conversion of uroporphyrinogen III to precorrin-2 via the intermediate formation of precorrin-1. It is a step in the biosynthesis of siroheme. Promotes nitrogen and sulfur assimilation as well as photosynthesis efficiency by triggering chlorophyll, nitrite reductase (NiR) and sulfite reductase (SiR) biosynthesis. The chain is S-adenosyl-L-methionine-dependent uroporphyrinogen III methyltransferase, chloroplastic from Arabidopsis thaliana (Mouse-ear cress).